The primary structure comprises 897 residues: Pre-mRNA-splicing factor CWC22 homolog (897 aa).

Over residues 1–10 (MSSSRSQSPE) the composition is skewed to polar residues. Residues 1 to 155 (MSSSRSQSPE…EKKKKEPLDI (155 aa)) are disordered. Basic and acidic residues-rich tracts occupy residues 36 to 54 (SSEK…REVS), 93 to 107 (RSKE…EKSP), and 131 to 155 (RSSE…PLDI). Residues 194-382 (KKKIHGLVNR…ETAMQIRKDK (189 aa)) enclose the MIF4G domain. The segment at 444-472 (NADISDEDGGDELDDEEEGSDVEEAPKKT) is disordered. Acidic residues predominate over residues 447–466 (ISDEDGGDELDDEEEGSDVE). One can recognise an MI domain in the interval 485–601 (AFRREVYLTM…DWKILADMKM (117 aa)). Composition is skewed to low complexity over residues 689 to 710 (LDQL…SDSS) and 720 to 730 (DSSSDSSSSSE). Residues 689-897 (LDQLKAESSS…VESDDRRRRR (209 aa)) are disordered. Residues 743 to 897 (NSEESSKKKE…VESDDRRRRR (155 aa)) are compositionally biased toward basic and acidic residues.

It belongs to the CWC22 family. In terms of tissue distribution, expressed in germ cells, oocytes, and sperm cells.

It localises to the nucleus. It is found in the nucleus speckle. Required for pre-mRNA splicing and for exon-junction complex (EJC) assembly. Hinders EIF4A3 from non-specifically binding RNA and escorts it to the splicing machinery to promote EJC assembly on mature mRNAs. Through its role in EJC assembly, required for nonsense-mediated mRNA decay. Plays a role in the nuclear retention of unspliced mRNAs. Plays a role in sex determination. Required for early embryogenesis and tissue differentiation. This chain is Pre-mRNA-splicing factor CWC22 homolog, found in Caenorhabditis elegans.